A 131-amino-acid chain; its full sequence is D-ribose pyranase (131 aa).

H20 functions as the Proton donor in the catalytic mechanism. Residues D28, H98, and 120 to 122 (YSN) each bind substrate.

This sequence belongs to the RbsD / FucU family. RbsD subfamily. Homodecamer.

The protein localises to the cytoplasm. It catalyses the reaction beta-D-ribopyranose = beta-D-ribofuranose. It participates in carbohydrate metabolism; D-ribose degradation; D-ribose 5-phosphate from beta-D-ribopyranose: step 1/2. Its function is as follows. Catalyzes the interconversion of beta-pyran and beta-furan forms of D-ribose. In Lactiplantibacillus plantarum (strain ATCC BAA-793 / NCIMB 8826 / WCFS1) (Lactobacillus plantarum), this protein is D-ribose pyranase.